The primary structure comprises 268 residues: ClpXP adapter protein SpxH (268 aa).

It belongs to the SpxH family. In terms of assembly, interacts with Spx.

It is found in the cytoplasm. Adapter protein required for efficient degradation of Spx by ClpXP under non-stress conditions. Interaction with Spx stabilizes Spx and exposes the C-terminus of Spx for recognition and proteolysis by ClpXP. In Staphylococcus aureus (strain MRSA252), this protein is ClpXP adapter protein SpxH.